A 416-amino-acid chain; its full sequence is Gamma-glutamyl phosphate reductase (416 aa).

It belongs to the gamma-glutamyl phosphate reductase family.

The protein localises to the cytoplasm. It carries out the reaction L-glutamate 5-semialdehyde + phosphate + NADP(+) = L-glutamyl 5-phosphate + NADPH + H(+). It participates in amino-acid biosynthesis; L-proline biosynthesis; L-glutamate 5-semialdehyde from L-glutamate: step 2/2. Catalyzes the NADPH-dependent reduction of L-glutamate 5-phosphate into L-glutamate 5-semialdehyde and phosphate. The product spontaneously undergoes cyclization to form 1-pyrroline-5-carboxylate. The chain is Gamma-glutamyl phosphate reductase from Streptococcus pyogenes serotype M6 (strain ATCC BAA-946 / MGAS10394).